Here is a 55-residue protein sequence, read N- to C-terminus: MAKDIREKIKLESTAGTGHFYTTTKNKRNMPEKMLIKKFDPVARKHVDYKETKLK.

The protein belongs to the bacterial ribosomal protein bL33 family.

This Bordetella pertussis (strain Tohama I / ATCC BAA-589 / NCTC 13251) protein is Large ribosomal subunit protein bL33.